The following is a 197-amino-acid chain: Transcription factor FapR (197 aa).

Belongs to the FapR family.

Transcriptional factor involved in regulation of membrane lipid biosynthesis by repressing genes involved in fatty acid and phospholipid metabolism. The chain is Transcription factor FapR from Bacillus cytotoxicus (strain DSM 22905 / CIP 110041 / 391-98 / NVH 391-98).